A 672-amino-acid chain; its full sequence is MSKAFKLTSKFKPSGDQPQAIEKLVAGLEDGLAYQTLLGVTGSGKTFTIANAIEKVQRPTLILEPNKTLAAQFYAEMREFFPENAVEYFVSYYDYYQPEAYVPSSDTYIEKDASINDHIEQMRLSATKAITERHDTIIIATVSAIYGLGDPDSYLKMLLHLTRGDQIDQRKILQRLAELQYTRNDLELRRATYRVNGDIIDIYPADSEREAVRVELFDDEVENLSYFDPLTGEMLRRVPRITVYPKTHYVTPREKLLSTLDQIKIELKERLSQLEKANKLVERQRLEQRTKFDMEMILELGYCSGIENYSRYLSGRNEGEPPPTLIDYLPKDALLIIDESHVTIPQLGGMYRGDRARKETLVEYGFRLPSALDNRPLRFDEFEKLAPQTIFISATPGPYEEKQSDQVVELLVRPTGLIDPEIEVRPVATQVDDLLSEIKKRAAQNERVLVTTLTKRMAEDLTEYFTEHNVRVRYLHSDIDTVERVEIIRDLRLGVFDMLVGINLLREGLDIPEVSLVAILDADKEGFLRSERSLIQTMGRAARNVHGKAILYADRITDSMKRAMEEAERRRIAQSAYNEKHHITPKSIQKAVTEIIEGARTYTERGRFVNQAQLIAEEEAKYIAMTPKQLAKELRKLEEQMYHHARNLEFEEAAAVRDKIQHIRKGLLEVKE.

Residues 26-181 (AGLEDGLAYQ…ILQRLAELQY (156 aa)) form the Helicase ATP-binding domain. 39–46 (GVTGSGKT) is a binding site for ATP. The short motif at 92–115 (YYDYYQPEAYVPSSDTYIEKDASI) is the Beta-hairpin element. The Helicase C-terminal domain occupies 430–592 (QVDDLLSEIK…ITPKSIQKAV (163 aa)). Positions 631 to 666 (AKELRKLEEQMYHHARNLEFEEAAAVRDKIQHIRKG) constitute a UVR domain.

This sequence belongs to the UvrB family. As to quaternary structure, forms a heterotetramer with UvrA during the search for lesions. Interacts with UvrC in an incision complex.

The protein resides in the cytoplasm. The UvrABC repair system catalyzes the recognition and processing of DNA lesions. A damage recognition complex composed of 2 UvrA and 2 UvrB subunits scans DNA for abnormalities. Upon binding of the UvrA(2)B(2) complex to a putative damaged site, the DNA wraps around one UvrB monomer. DNA wrap is dependent on ATP binding by UvrB and probably causes local melting of the DNA helix, facilitating insertion of UvrB beta-hairpin between the DNA strands. Then UvrB probes one DNA strand for the presence of a lesion. If a lesion is found the UvrA subunits dissociate and the UvrB-DNA preincision complex is formed. This complex is subsequently bound by UvrC and the second UvrB is released. If no lesion is found, the DNA wraps around the other UvrB subunit that will check the other stand for damage. In Coxiella burnetii (strain CbuK_Q154) (Coxiella burnetii (strain Q154)), this protein is UvrABC system protein B.